The following is a 148-amino-acid chain: C-C motif chemokine 2 (148 aa).

Residues 1 to 23 (MQVPVMLLGLLFTVAGWSIHVLA) form the signal peptide. Residue Gln-24 is modified to Pyrrolidone carboxylic acid. Intrachain disulfides connect Cys-34–Cys-59 and Cys-35–Cys-75. N-linked (GlcNAc...) asparagine glycosylation occurs at Asn-126.

Belongs to the intercrine beta (chemokine CC) family. As to quaternary structure, monomer or homodimer; in equilibrium. Is tethered on endothelial cells by glycosaminoglycan (GAG) side chains of proteoglycans. Interacts with TNFAIP6 (via Link domain). Processing at the N-terminus can regulate receptor and target cell selectivity. Deletion of the N-terminal residue converts it from an activator of basophil to an eosinophil chemoattractant. In terms of processing, N-Glycosylated.

The protein localises to the secreted. In terms of biological role, acts as a ligand for C-C chemokine receptor CCR2. Signals through binding and activation of CCR2 and induces a strong chemotactic response and mobilization of intracellular calcium ions. Exhibits a chemotactic activity for monocytes and basophils but not neutrophils or eosinophils. Plays an important role in mediating peripheral nerve injury-induced neuropathic pain. Increases NMDA-mediated synaptic transmission in both dopamine D1 and D2 receptor-containing neurons, which may be caused by MAPK/ERK-dependent phosphorylation of GRIN2B/NMDAR2B. The polypeptide is C-C motif chemokine 2 (Ccl2) (Mus musculus (Mouse)).